The primary structure comprises 247 residues: MKISIFFAFLGAAVALPVNDDDKIVGGYTCPKHLVPYQVSLHDGISHQCGGSLISDQWVLSAAHCYKRKLQVRLGEHNIHVLEGGEQFIDAEKIIRHPEYNKDTLDNDIMLIKLKSPAVLNSQVSTVSLPRSCASTDAQCLVSGWGNTVSIGGKYPALLQCLEAPVLSASSCKKSYPGQITSNMFCLGFLEGGKDSCDGDSGGPVVCNGEIQGIVSWGSVCAMRGKPGVYTKVCNYLSWIQETMANN.

The signal sequence occupies residues 1-15 (MKISIFFAFLGAAVA). Positions 16-23 (LPVNDDDK) are cleaved as a propeptide — activation peptide. The 222-residue stretch at 24 to 245 (IVGGYTCPKH…YLSWIQETMA (222 aa)) folds into the Peptidase S1 domain. 6 disulfides stabilise this stretch: Cys-30-Cys-161, Cys-49-Cys-65, Cys-133-Cys-234, Cys-140-Cys-207, Cys-172-Cys-186, and Cys-197-Cys-221. The active-site Charge relay system is the His-64. The Ca(2+) site is built by Glu-76, Asn-78, Val-81, and Glu-86. Asp-108 acts as the Charge relay system in catalysis. Ser-201 serves as the catalytic Charge relay system.

Belongs to the peptidase S1 family. Ca(2+) is required as a cofactor. In terms of processing, proteolytically cleaved and activated by an autocatalytic mechanism. Cleavage by CTRC inhibits autoactivation.

It localises to the secreted. It is found in the extracellular space. The catalysed reaction is Preferential cleavage: Arg-|-Xaa, Lys-|-Xaa.. With respect to regulation, activated by autocatalytic cleavage. Cleavage by CTRC inhibits autoactivation. Its function is as follows. Serine protease capable of autoactivation. This chain is Trypsin-4, found in Rattus norvegicus (Rat).